The sequence spans 211 residues: Phosphoserine phosphatase (211 aa).

Residue aspartate 11 is the Nucleophile of the active site. The Mg(2+) site is built by aspartate 11 and aspartate 13. Aspartate 13 functions as the Proton donor in the catalytic mechanism. Substrate is bound by residues glutamate 20, arginine 56, 99–100, and lysine 144; that span reads SG. Mg(2+) is bound at residue aspartate 167. Residue asparagine 170 coordinates substrate.

It belongs to the HAD-like hydrolase superfamily. SerB family. Mg(2+) serves as cofactor.

It carries out the reaction O-phospho-L-serine + H2O = L-serine + phosphate. The catalysed reaction is O-phospho-D-serine + H2O = D-serine + phosphate. It participates in amino-acid biosynthesis; L-serine biosynthesis; L-serine from 3-phospho-D-glycerate: step 3/3. This chain is Phosphoserine phosphatase, found in Methanocaldococcus jannaschii (strain ATCC 43067 / DSM 2661 / JAL-1 / JCM 10045 / NBRC 100440) (Methanococcus jannaschii).